The sequence spans 547 residues: Intercellular adhesion molecule 3 (547 aa).

Residues 1–29 (MATMVPSVLWPRACWTLLVCCLLTPGVQG) form the signal peptide. At 30 to 485 (QEFLLRVEPQ…VMDIEAGSSH (456 aa)) the chain is on the extracellular side. Residues 46 to 103 (GGSLFVNCSTDCPSSEKIALETSLSKELVASGMGWAAFNLSNVTGNSRILCSVYCNGS) enclose the Ig-like C2-type 1 domain. Asn52, Asn84, Asn87, Asn101, Asn110, and Asn134 each carry an N-linked (GlcNAc...) asparagine glycan. 2 cysteine pairs are disulfide-bonded: Cys53/Cys96 and Cys57/Cys100. Residues 132-197 (GQNFTLRCQV…FSCRTELDMQ (66 aa)) enclose the Ig-like C2-type 2 domain. Cys139 and Cys190 are oxidised to a cystine. Residues Asn206, Asn264, Asn295, Asn308, Asn320, Asn363, Asn389, Asn453, and Asn457 are each glycosylated (N-linked (GlcNAc...) asparagine). In terms of domain architecture, Ig-like C2-type 3 spans 234–301 (ETSWPVDCTL…IVCNVTLGGE (68 aa)). Cys241 and Cys294 form a disulfide bridge. The 54-residue stretch at 329–382 (GSTVTVSCMAGARVQVTLDGVPAAAPGQPAQLQLNATESDDGRSFFCSATLEVD) folds into the Ig-like C2-type 4 domain. A disulfide bond links Cys336 and Cys375. The Ig-like C2-type 5 domain maps to 416–469 (KTRHVLQCQARGNPYPELRCLKEGSSREVPVGIPFFVNVTHNGTYQCQASSSRG). A disulfide bridge connects residues Cys423 and Cys462. Residues 486–510 (FVPVFVAVLLTLGVVTIVLALMYVF) form a helical membrane-spanning segment. The Cytoplasmic portion of the chain corresponds to 511 to 547 (REHQRSGSYHVREESTYLPLTSMQPTEAMGEEPSRAE).

Belongs to the immunoglobulin superfamily. ICAM family. Interacts with moesin/MSN. In terms of processing, upon stimulation by a physiologic stimuli becomes rapidly and transiently phosphorylated on serine residues. Post-translationally, N-glycosylated; glycans consist of a mixture of tri- and tetra-antennary complex-type chains and high-mannose chains. As to expression, leukocytes.

It is found in the membrane. Its function is as follows. ICAM proteins are ligands for the leukocyte adhesion protein LFA-1 (integrin alpha-L/beta-2). ICAM3 is also a ligand for integrin alpha-D/beta-2. In association with integrin alpha-L/beta-2, contributes to apoptotic neutrophil phagocytosis by macrophages. The sequence is that of Intercellular adhesion molecule 3 (ICAM3) from Homo sapiens (Human).